A 237-amino-acid chain; its full sequence is Putative exosome complex component rrp40 (237 aa).

Residues 67–137 (EDMVIGTIIE…EPEVVCLSQK (71 aa)) enclose the S1 motif domain.

The protein belongs to the RRP40 family. Component of the RNA exosome complex.

Its subcellular location is the cytoplasm. The protein resides in the nucleus. The protein localises to the nucleolus. In terms of biological role, non-catalytic component of the RNA exosome complex which has 3'-&gt;5' exoribonuclease activity and participates in a multitude of cellular RNA processing and degradation events. In Dictyostelium discoideum (Social amoeba), this protein is Putative exosome complex component rrp40 (exosc3).